Here is a 269-residue protein sequence, read N- to C-terminus: Hydroxyethylthiazole kinase (269 aa).

Residue M46 coordinates substrate. The ATP site is built by R122 and T168. G195 is a binding site for substrate.

This sequence belongs to the Thz kinase family. Mg(2+) is required as a cofactor.

The catalysed reaction is 5-(2-hydroxyethyl)-4-methylthiazole + ATP = 4-methyl-5-(2-phosphooxyethyl)-thiazole + ADP + H(+). It functions in the pathway cofactor biosynthesis; thiamine diphosphate biosynthesis; 4-methyl-5-(2-phosphoethyl)-thiazole from 5-(2-hydroxyethyl)-4-methylthiazole: step 1/1. In terms of biological role, catalyzes the phosphorylation of the hydroxyl group of 4-methyl-5-beta-hydroxyethylthiazole (THZ). The chain is Hydroxyethylthiazole kinase from Geobacillus kaustophilus (strain HTA426).